Here is a 562-residue protein sequence, read N- to C-terminus: Pentatricopeptide repeat-containing protein At3g22670, mitochondrial (562 aa).

Residues 1-31 constitute a mitochondrion transit peptide; that stretch reads MLTKLRISKLVSYTLPRRIFQRRFLVTNNTA. PPR repeat units lie at residues 165 to 199, 202 to 232, 238 to 268, 272 to 306, 307 to 341, 342 to 376, 377 to 411, 412 to 446, 450 to 484, and 485 to 519; these read SGHT…EESK, TLDT…MEKS, DTIA…LFDT, DART…EFTP, DVVT…GCNP, NVVT…GCVP, DAKF…GVRR, DVLV…EGES, NVET…DVSI, and DVST…GMVP.

Belongs to the PPR family. P subfamily.

It is found in the mitochondrion. This chain is Pentatricopeptide repeat-containing protein At3g22670, mitochondrial, found in Arabidopsis thaliana (Mouse-ear cress).